We begin with the raw amino-acid sequence, 452 residues long: Mannan endo-1,6-alpha-mannosidase DCW1 (452 aa).

The signal sequence occupies residues 1–18; sequence MKFSIYLIISLFSSFSHA. N-linked (GlcNAc...) asparagine glycans are attached at residues N25, N81, N106, N130, N200, N237, N240, N262, N271, and N286. Residue G431 is the site of GPI-anchor amidated glycine attachment. Residues 432 to 452 constitute a propeptide, removed in mature form; that stretch reads AGIITAIIGASLVGSCVWLIL.

Belongs to the glycosyl hydrolase 76 family.

It is found in the cell membrane. It catalyses the reaction Random hydrolysis of (1-&gt;6)-alpha-D-mannosidic linkages in unbranched (1-&gt;6)-mannans.. Probable mannosidase required for normal synthesis of the cell wall. The sequence is that of Mannan endo-1,6-alpha-mannosidase DCW1 (DCW1) from Candida albicans (strain SC5314 / ATCC MYA-2876) (Yeast).